Reading from the N-terminus, the 201-residue chain is Large ribosomal subunit protein uL4 (201 aa).

The disordered stretch occupies residues 44-71; sequence RAQKTRAEVTGSGKKPWRQKGTGRARSG.

This sequence belongs to the universal ribosomal protein uL4 family. As to quaternary structure, part of the 50S ribosomal subunit.

Its function is as follows. One of the primary rRNA binding proteins, this protein initially binds near the 5'-end of the 23S rRNA. It is important during the early stages of 50S assembly. It makes multiple contacts with different domains of the 23S rRNA in the assembled 50S subunit and ribosome. Functionally, forms part of the polypeptide exit tunnel. This Enterobacter sp. (strain 638) protein is Large ribosomal subunit protein uL4.